We begin with the raw amino-acid sequence, 192 residues long: Nucleoside triphosphate pyrophosphatase (192 aa).

Asp73 serves as the catalytic Proton acceptor.

This sequence belongs to the Maf family. It depends on a divalent metal cation as a cofactor.

The protein localises to the cytoplasm. It catalyses the reaction a ribonucleoside 5'-triphosphate + H2O = a ribonucleoside 5'-phosphate + diphosphate + H(+). The catalysed reaction is a 2'-deoxyribonucleoside 5'-triphosphate + H2O = a 2'-deoxyribonucleoside 5'-phosphate + diphosphate + H(+). Functionally, nucleoside triphosphate pyrophosphatase. May have a dual role in cell division arrest and in preventing the incorporation of modified nucleotides into cellular nucleic acids. This chain is Nucleoside triphosphate pyrophosphatase, found in Ehrlichia ruminantium (strain Welgevonden).